The following is a 107-amino-acid chain: L-rhamnose mutarotase (107 aa).

Tyr-18 provides a ligand contact to substrate. The active-site Proton donor is the His-22. Residues Tyr-41 and 76 to 77 each bind substrate; that span reads WW.

It belongs to the rhamnose mutarotase family. In terms of assembly, homodimer.

The protein resides in the cytoplasm. It catalyses the reaction alpha-L-rhamnose = beta-L-rhamnose. It participates in carbohydrate metabolism; L-rhamnose metabolism. Its function is as follows. Involved in the anomeric conversion of L-rhamnose. This is L-rhamnose mutarotase from Paraburkholderia xenovorans (strain LB400).